Reading from the N-terminus, the 522-residue chain is Protein nucleotidyltransferase YdiU (522 aa).

G109, G111, R112, K132, D144, G145, R195, and R202 together coordinate ATP. Residue D271 is the Proton acceptor of the active site. Mg(2+) contacts are provided by N272 and D281. D281 is a binding site for ATP.

The protein belongs to the SELO family. Mg(2+) is required as a cofactor. The cofactor is Mn(2+).

It carries out the reaction L-seryl-[protein] + ATP = 3-O-(5'-adenylyl)-L-seryl-[protein] + diphosphate. The catalysed reaction is L-threonyl-[protein] + ATP = 3-O-(5'-adenylyl)-L-threonyl-[protein] + diphosphate. It catalyses the reaction L-tyrosyl-[protein] + ATP = O-(5'-adenylyl)-L-tyrosyl-[protein] + diphosphate. The enzyme catalyses L-histidyl-[protein] + UTP = N(tele)-(5'-uridylyl)-L-histidyl-[protein] + diphosphate. It carries out the reaction L-seryl-[protein] + UTP = O-(5'-uridylyl)-L-seryl-[protein] + diphosphate. The catalysed reaction is L-tyrosyl-[protein] + UTP = O-(5'-uridylyl)-L-tyrosyl-[protein] + diphosphate. Its function is as follows. Nucleotidyltransferase involved in the post-translational modification of proteins. It can catalyze the addition of adenosine monophosphate (AMP) or uridine monophosphate (UMP) to a protein, resulting in modifications known as AMPylation and UMPylation. This is Protein nucleotidyltransferase YdiU from Burkholderia ambifaria (strain MC40-6).